Consider the following 858-residue polypeptide: DNA mismatch repair protein MutS (858 aa).

613–620 is an ATP binding site; sequence GPNMAGKS.

It belongs to the DNA mismatch repair MutS family.

This protein is involved in the repair of mismatches in DNA. It is possible that it carries out the mismatch recognition step. This protein has a weak ATPase activity. This chain is DNA mismatch repair protein MutS, found in Dehalococcoides mccartyi (strain CBDB1).